The following is a 375-amino-acid chain: Tryptophan--tRNA ligase (375 aa).

Positions 81–89 match the 'HIGH' region motif; sequence PSGPVHIGH. Residues 258 to 262 carry the 'KMSKS' region motif; sequence KMSAS.

This sequence belongs to the class-I aminoacyl-tRNA synthetase family.

It localises to the cytoplasm. The enzyme catalyses tRNA(Trp) + L-tryptophan + ATP = L-tryptophyl-tRNA(Trp) + AMP + diphosphate + H(+). The sequence is that of Tryptophan--tRNA ligase from Pyrobaculum aerophilum (strain ATCC 51768 / DSM 7523 / JCM 9630 / CIP 104966 / NBRC 100827 / IM2).